The following is a 203-amino-acid chain: Anti-sigma-W factor RsiW (203 aa).

At 1–86 (MECPKEIVLL…TARLRRFLHR (86 aa)) the chain is on the cytoplasmic side. Zn(2+) contacts are provided by H30, C34, and C37. Residues 87 to 103 (HPLLTAASLFLALTLGS) form a helical membrane-spanning segment. At 104–203 (LASSWGERGA…RFNRALQSIE (100 aa)) the chain is on the extracellular side.

The protein belongs to the zinc-associated anti-sigma factor (ZAS) superfamily. Anti-sigma-W factor family. It depends on Zn(2+) as a cofactor. Is processed by three successive proteolytic events. First, the extracellular region of RsiW is cleaved by PrsW (Site-1 cleavage) in response to cell envelope stresses. Next, it undergoes cleavage at an intramembrane site (Site-2 cleavage) mediated by RasP. This cleavage uncovers a cryptic proteolytic tag with conserved alanine residues in the transmembrane segment, that is recognized mainly by the ClpXP protease, which completely degrades the protein in the cytoplasm and leads to the induction of the sigma-W-controlled genes.

Its subcellular location is the membrane. Functionally, is the anti-sigma factor for SigW. The presence of RsiW leads to the inactivation of SigW, and its proteolytic destruction to sigma-W activation. This Geobacillus kaustophilus (strain HTA426) protein is Anti-sigma-W factor RsiW (rsiW).